The sequence spans 243 residues: NH(3)-dependent NAD(+) synthetase (243 aa).

An ATP-binding site is contributed by 31–38; that stretch reads GVSGGIDS. D37 serves as a coordination point for Mg(2+). Deamido-NAD(+) is bound at residue R110. Residue T130 participates in ATP binding. E135 is a binding site for Mg(2+). Positions 143 and 150 each coordinate deamido-NAD(+). Residues K159 and S181 each contribute to the ATP site. Position 227–228 (227–228) interacts with deamido-NAD(+); that stretch reads HK.

This sequence belongs to the NAD synthetase family. Homodimer.

The enzyme catalyses deamido-NAD(+) + NH4(+) + ATP = AMP + diphosphate + NAD(+) + H(+). The protein operates within cofactor biosynthesis; NAD(+) biosynthesis; NAD(+) from deamido-NAD(+) (ammonia route): step 1/1. Catalyzes the ATP-dependent amidation of deamido-NAD to form NAD. Uses ammonia as a nitrogen source. This is NH(3)-dependent NAD(+) synthetase from Malacoplasma penetrans (strain HF-2) (Mycoplasma penetrans).